The sequence spans 614 residues: UvrABC system protein C (614 aa).

A GIY-YIG domain is found at 26–104 (NLPGVYKMLG…IKEYRPPYNV (79 aa)). Residues 215 to 250 (SDIHTALIEKMEASAEELDFEKAVFYRDQLSMLREV) form the UVR domain.

This sequence belongs to the UvrC family. As to quaternary structure, interacts with UvrB in an incision complex.

It localises to the cytoplasm. In terms of biological role, the UvrABC repair system catalyzes the recognition and processing of DNA lesions. UvrC both incises the 5' and 3' sides of the lesion. The N-terminal half is responsible for the 3' incision and the C-terminal half is responsible for the 5' incision. This chain is UvrABC system protein C, found in Psychrobacter cryohalolentis (strain ATCC BAA-1226 / DSM 17306 / VKM B-2378 / K5).